The primary structure comprises 67 residues: Protein SlyX homolog (67 aa).

The protein belongs to the SlyX family.

This chain is Protein SlyX homolog, found in Thiobacillus denitrificans (strain ATCC 25259 / T1).